The following is a 453-amino-acid chain: Tubulin alpha chain (453 aa).

Q11 provides a ligand contact to GTP. K40 is modified (N6-acetyllysine). Residues E71, G144, T145, T179, N206, and N228 each coordinate GTP. E71 lines the Mg(2+) pocket. The active site involves E254.

The protein belongs to the tubulin family. In terms of assembly, dimer of alpha and beta chains. A typical microtubule is a hollow water-filled tube with an outer diameter of 25 nm and an inner diameter of 15 nM. Alpha-beta heterodimers associate head-to-tail to form protofilaments running lengthwise along the microtubule wall with the beta-tubulin subunit facing the microtubule plus end conferring a structural polarity. Microtubules usually have 13 protofilaments but different protofilament numbers can be found in some organisms and specialized cells. The cofactor is Mg(2+). Post-translationally, undergoes a tyrosination/detyrosination cycle, the cyclic removal and re-addition of a C-terminal tyrosine residue by the enzymes tubulin tyrosine carboxypeptidase (TTCP) and tubulin tyrosine ligase (TTL), respectively. In terms of processing, acetylation of alpha chains at Lys-40 stabilizes microtubules and affects affinity and processivity of microtubule motors. This modification has a role in multiple cellular functions, ranging from cell motility, cell cycle progression or cell differentiation to intracellular trafficking and signaling.

It is found in the cytoplasm. The protein resides in the cytoskeleton. It carries out the reaction GTP + H2O = GDP + phosphate + H(+). In terms of biological role, tubulin is the major constituent of microtubules, a cylinder consisting of laterally associated linear protofilaments composed of alpha- and beta-tubulin heterodimers. Microtubules grow by the addition of GTP-tubulin dimers to the microtubule end, where a stabilizing cap forms. Below the cap, tubulin dimers are in GDP-bound state, owing to GTPase activity of alpha-tubulin. The polypeptide is Tubulin alpha chain (TUBA) (Neospora caninum (Coccidian parasite)).